The following is a 155-amino-acid chain: Ribosomal RNA large subunit methyltransferase H (155 aa).

S-adenosyl-L-methionine-binding positions include Leu72, Gly103, and 122 to 127 (LSALTL).

It belongs to the RNA methyltransferase RlmH family. Homodimer.

It localises to the cytoplasm. It carries out the reaction pseudouridine(1915) in 23S rRNA + S-adenosyl-L-methionine = N(3)-methylpseudouridine(1915) in 23S rRNA + S-adenosyl-L-homocysteine + H(+). Specifically methylates the pseudouridine at position 1915 (m3Psi1915) in 23S rRNA. The protein is Ribosomal RNA large subunit methyltransferase H of Salmonella dublin (strain CT_02021853).